A 193-amino-acid chain; its full sequence is Inosine triphosphate pyrophosphatase (193 aa).

ITP is bound at residue 10–15 (TGNANK). Position 42 (Glu42) interacts with Mg(2+). ITP contacts are provided by residues Lys54, 70 to 71 (DT), Lys87, 146 to 149 (FGWD), Lys169, and 174 to 175 (HR).

It belongs to the HAM1 NTPase family. In terms of assembly, homodimer. Mg(2+) is required as a cofactor. It depends on Mn(2+) as a cofactor.

It is found in the cytoplasm. It localises to the nucleus. It catalyses the reaction ITP + H2O = IMP + diphosphate + H(+). The catalysed reaction is dITP + H2O = dIMP + diphosphate + H(+). The enzyme catalyses XTP + H2O = XMP + diphosphate + H(+). In terms of biological role, pyrophosphatase that hydrolyzes non-canonical purine nucleotides such as inosine triphosphate (ITP), deoxyinosine triphosphate (dITP) or xanthosine 5'-triphosphate (XTP) to their respective monophosphate derivatives. The enzyme does not distinguish between the deoxy- and ribose forms. Probably excludes non-canonical purines from RNA and DNA precursor pools, thus preventing their incorporation into RNA and DNA and avoiding chromosomal lesions. The chain is Inosine triphosphate pyrophosphatase from Mycosarcoma maydis (Corn smut fungus).